The sequence spans 638 residues: RAF proto-oncogene serine/threonine-protein kinase (638 aa).

A Phosphoserine modification is found at serine 43. One can recognise an RBD domain in the interval 56–130; it reads STMRVYLPNK…VGAELQVDFL (75 aa). Residues 137–183 form a Phorbol-ester/DAG-type zinc finger; that stretch reads THNFVRKTFLKLAFCDICQKFLLNAFRCQTCGYKFHEHCSTKVPTMC. Residues histidine 138, cysteine 151, cysteine 154, cysteine 164, cysteine 167, histidine 172, cysteine 175, and cysteine 183 each contribute to the Zn(2+) site. Serine 257 bears the Phosphoserine mark. A Phosphothreonine; by autocatalysis modification is found at threonine 266. The interval 279–323 is disordered; it reads LRSHSESGSPNNLSPTGWSNAKAPAPTHREKAASSTGQEKNKIRA. Residues 284–297 are compositionally biased toward polar residues; that stretch reads ESGSPNNLSPTGWS. The residue at position 329 (serine 329) is a Phosphoserine. Positions 340 to 600 constitute a Protein kinase domain; it reads VMLSSRIGSG…PQILSSIELL (261 aa). ATP contacts are provided by residues 346-354 and lysine 366; that span reads IGSGSFGTV. Catalysis depends on aspartate 459, which acts as the Proton acceptor. A Phosphoserine modification is found at serine 490.

It belongs to the protein kinase superfamily. TKL Ser/Thr protein kinase family. RAF subfamily. Zn(2+) is required as a cofactor. In terms of processing, phosphorylation at Ser-257 inactivates kinase activity. Dephosphorylation of Ser-257 by a complex containing protein phosphatase 1 relieves inactivation, leading to stimulate RAF1 activity.

The protein localises to the cytoplasm. The protein resides in the cell membrane. It catalyses the reaction L-seryl-[protein] + ATP = O-phospho-L-seryl-[protein] + ADP + H(+). The catalysed reaction is L-threonyl-[protein] + ATP = O-phospho-L-threonyl-[protein] + ADP + H(+). Its function is as follows. Serine/threonine-protein kinase that acts as a regulatory link between the membrane-associated Ras GTPases and the MAPK/ERK cascade, and this critical regulatory link functions as a switch determining cell fate decisions. RAF1 activation initiates a mitogen-activated protein kinase (MAPK) cascade that comprises a sequential phosphorylation of the dual-specific MAPK kinases (MAP2K1/MEK1 and MAP2K2/MEK2) and the extracellular signal-regulated kinases (MAPK3/ERK1 and MAPK1/ERK2). This chain is RAF proto-oncogene serine/threonine-protein kinase (raf1), found in Xenopus laevis (African clawed frog).